Consider the following 89-residue polypeptide: Small ribosomal subunit protein uS15 (89 aa).

Belongs to the universal ribosomal protein uS15 family. In terms of assembly, part of the 30S ribosomal subunit. Forms a bridge to the 50S subunit in the 70S ribosome, contacting the 23S rRNA.

One of the primary rRNA binding proteins, it binds directly to 16S rRNA where it helps nucleate assembly of the platform of the 30S subunit by binding and bridging several RNA helices of the 16S rRNA. Its function is as follows. Forms an intersubunit bridge (bridge B4) with the 23S rRNA of the 50S subunit in the ribosome. The protein is Small ribosomal subunit protein uS15 of Clavibacter michiganensis subsp. michiganensis (strain NCPPB 382).